The primary structure comprises 356 residues: UDP-N-acetylglucosamine--N-acetylmuramyl-(pentapeptide) pyrophosphoryl-undecaprenol N-acetylglucosamine transferase (356 aa).

UDP-N-acetyl-alpha-D-glucosamine-binding positions include 12–14 (TGG), Asn124, Arg163, Ser188, Ile242, 261–266 (ALTVSE), and Gln287.

It belongs to the glycosyltransferase 28 family. MurG subfamily.

It is found in the cell inner membrane. It catalyses the reaction di-trans,octa-cis-undecaprenyl diphospho-N-acetyl-alpha-D-muramoyl-L-alanyl-D-glutamyl-meso-2,6-diaminopimeloyl-D-alanyl-D-alanine + UDP-N-acetyl-alpha-D-glucosamine = di-trans,octa-cis-undecaprenyl diphospho-[N-acetyl-alpha-D-glucosaminyl-(1-&gt;4)]-N-acetyl-alpha-D-muramoyl-L-alanyl-D-glutamyl-meso-2,6-diaminopimeloyl-D-alanyl-D-alanine + UDP + H(+). It participates in cell wall biogenesis; peptidoglycan biosynthesis. Its function is as follows. Cell wall formation. Catalyzes the transfer of a GlcNAc subunit on undecaprenyl-pyrophosphoryl-MurNAc-pentapeptide (lipid intermediate I) to form undecaprenyl-pyrophosphoryl-MurNAc-(pentapeptide)GlcNAc (lipid intermediate II). This chain is UDP-N-acetylglucosamine--N-acetylmuramyl-(pentapeptide) pyrophosphoryl-undecaprenol N-acetylglucosamine transferase, found in Azotobacter vinelandii (strain DJ / ATCC BAA-1303).